A 577-amino-acid polypeptide reads, in one-letter code: Protein CBFA2T1 (577 aa).

Residues 1–10 (MPDRTEKHST) show a composition bias toward basic and acidic residues. Residues 1 to 87 (MPDRTEKHST…SSSSLANQQL (87 aa)) form a disordered region. Position 14 is a phosphoserine (S14). Positions 42–59 (SSFTPTTLTNGTSHSPTA) are enriched in polar residues. The segment covering 68–87 (NGFSNGPSSSSSSSLANQQL) has biased composition (low complexity). Residues 93–188 (ARQLSKLKRF…NPAQYLAQHE (96 aa)) enclose the TAFH domain. A disordered region spans residues 203–271 (SELLLDVNEN…LPHPTPPPPQ (69 aa)). The segment covering 211–237 (ENGKRRTPDRTKENGFDREPLHSEHPS) has biased composition (basic and acidic residues). Residues 244-258 (SPGQRYSPNNGLSYQ) are compositionally biased toward polar residues. A compositionally biased stretch (pro residues) spans 262–271 (LPHPTPPPPQ). The tract at residues 310-356 (QEEMIDHRLTDREWAEEWKHLDHLLNCIMDMVEKTRRSLTVLRRCQE) is important for oligomerization. The interval 310-356 (QEEMIDHRLTDREWAEEWKHLDHLLNCIMDMVEKTRRSLTVLRRCQE) is nervy homology region 2 (NHR2). The disordered stretch occupies residues 374-396 (DLKKGGSSSSSHSRQQSPVNPDP). Positions 380–390 (SSSSSHSRQQS) are enriched in low complexity. S390 carries the phosphoserine modification. The tract at residues 416 to 465 (EEIWKKAEEAVNEVKRQAMTELQKAVSEAERKAHDMITTERAKMERTVAE) is nervy homology region 3 (NHR3). Zn(2+) contacts are provided by C488, C491, C499, C502, C508, C512, H520, and C524. Residues 488–524 (CWNCGRKASETCSGCNTARYCGSFCQHKDWEKHHHIC) form an MYND-type zinc finger. The interval 529–577 (QAPQQGDTPAVSSSVTPSSGAGSPMDTPPAATPRSTTPGTPSTIETTPR) is disordered. Low complexity-rich tracts occupy residues 536 to 553 (TPAV…GSPM) and 560 to 577 (TPRS…TTPR).

This sequence belongs to the CBFA2T family. In terms of assembly, homotetramer. Heterotetramer with CBFA2T2 and CBFA2T3. Interacts with TCF12, SIN3A, HDAC1, HDAC2, HDAC3, NCOR1 and NCOR2. Interacts with ATN1 (via its N-terminus); the interaction enhances the transcriptional repression.

The protein localises to the nucleus. Functionally, transcriptional corepressor which facilitates transcriptional repression via its association with DNA-binding transcription factors and recruitment of other corepressors and histone-modifying enzymes. Can repress the expression of MMP7 in a ZBTB33-dependent manner. Can repress transactivation mediated by TCF12. Acts as a negative regulator of adipogenesis. This chain is Protein CBFA2T1 (Runx1t1), found in Mus musculus (Mouse).